Consider the following 549-residue polypeptide: ATP synthase subunit alpha (549 aa).

G172 to T179 contacts ATP.

This sequence belongs to the ATPase alpha/beta chains family. In terms of assembly, F-type ATPases have 2 components, CF(1) - the catalytic core - and CF(0) - the membrane proton channel. CF(1) has five subunits: alpha(3), beta(3), gamma(1), delta(1), epsilon(1). CF(0) has three main subunits: a(1), b(2) and c(9-12). The alpha and beta chains form an alternating ring which encloses part of the gamma chain. CF(1) is attached to CF(0) by a central stalk formed by the gamma and epsilon chains, while a peripheral stalk is formed by the delta and b chains.

The protein resides in the cell membrane. The catalysed reaction is ATP + H2O + 4 H(+)(in) = ADP + phosphate + 5 H(+)(out). Produces ATP from ADP in the presence of a proton gradient across the membrane. The alpha chain is a regulatory subunit. The chain is ATP synthase subunit alpha from Mycobacterium tuberculosis (strain CDC 1551 / Oshkosh).